The sequence spans 291 residues: 4-hydroxy-tetrahydrodipicolinate synthase (291 aa).

T42 contacts pyruvate. Y129 acts as the Proton donor/acceptor in catalysis. K157 serves as the catalytic Schiff-base intermediate with substrate. I198 contacts pyruvate.

Belongs to the DapA family. Homotetramer; dimer of dimers.

It is found in the cytoplasm. The enzyme catalyses L-aspartate 4-semialdehyde + pyruvate = (2S,4S)-4-hydroxy-2,3,4,5-tetrahydrodipicolinate + H2O + H(+). Its pathway is amino-acid biosynthesis; L-lysine biosynthesis via DAP pathway; (S)-tetrahydrodipicolinate from L-aspartate: step 3/4. In terms of biological role, catalyzes the condensation of (S)-aspartate-beta-semialdehyde [(S)-ASA] and pyruvate to 4-hydroxy-tetrahydrodipicolinate (HTPA). The sequence is that of 4-hydroxy-tetrahydrodipicolinate synthase from Chlamydia pneumoniae (Chlamydophila pneumoniae).